The primary structure comprises 839 residues: Transcription regulator protein BACH2 (839 aa).

One can recognise a BTB domain in the interval 37-103 (CDVTLIVERK…AYTAKLLLSR (67 aa)). Disordered regions lie at residues 150-170 (QRPQ…EETM) and 247-331 (HGTS…LDRS). Positions 161–170 (GEEEEEEETM) are enriched in acidic residues. Residues 247 to 263 (HGTSGFASTFSEDSPGN) show a composition bias toward polar residues. The segment covering 297 to 312 (TDIKDRPGDVEMDRKQ) has biased composition (basic and acidic residues). Ser314 carries the post-translational modification Phosphoserine. Residues 321–331 (TPTGAACLDRS) are compositionally biased toward low complexity. Residues Lys381 and Lys420 each participate in a glycyl lysine isopeptide (Lys-Gly) (interchain with G-Cter in SUMO2) cross-link. Ser520 carries the phosphoserine modification. Positions 582–609 (QSYGTNSSDESGSFSEADSESCPVQDRG) are disordered. The segment covering 583 to 597 (SYGTNSSDESGSFSE) has biased composition (polar residues). The region spanning 645-708 (FIHDIRRRSK…GELLDNFSCL (64 aa)) is the bZIP domain. Residues 650–666 (RRRSKNRIAAQRCRKRK) form a basic motif region. Residues 670–677 (IQNLECEI) are leucine-zipper. A disordered region spans residues 778-813 (PWVPSNTSENCTSGRRLEGSDPGTFSERGPPLEARS). The span at 781 to 790 (PSNTSENCTS) shows a compositional bias: polar residues. The Nuclear export signal motif lies at 819 to 839 (DFCQEMTEKCTTDEQPRKDYA).

Belongs to the bZIP family. CNC subfamily. As to quaternary structure, homodimer; disulfide-linked. Heterodimer of BACH2 and Maf-related transcription factors. In terms of processing, the reversible disulfide bond may provide a mechanism to regulate the activity in oxidative stress responses. Phosphorylation at Ser-520 downstream of the PI-3K pathway promotes nuclear export. Detected in brain and spleen.

It is found in the cytoplasm. Its subcellular location is the nucleus. Its function is as follows. Transcriptional regulator that acts as a repressor or activator. Binds to Maf recognition elements (MARE). Plays an important role in coordinating transcription activation and repression by MAFK. Induces apoptosis in response to oxidative stress through repression of the antiapoptotic factor HMOX1. Positively regulates the nuclear import of actin. Is a key regulator of adaptive immunity, crucial for the maintenance of regulatory T-cell function and B-cell maturation. This is Transcription regulator protein BACH2 (Bach2) from Mus musculus (Mouse).